A 545-amino-acid polypeptide reads, in one-letter code: CTP synthase (545 aa).

The segment at 1–266 is amidoligase domain; the sequence is MATNYIFVTG…DDFVCERFRL (266 aa). Ser-14 contacts CTP. Residue Ser-14 participates in UTP binding. Residues 15 to 20 and Asp-72 each bind ATP; that span reads SLGKGI. Asp-72 and Glu-140 together coordinate Mg(2+). Residues 147–149, 187–192, and Lys-223 each bind CTP; these read DIE and KTKPTQ. UTP contacts are provided by residues 187-192 and Lys-223; that span reads KTKPTQ. Residue 239 to 241 participates in ATP binding; sequence KDV. The Glutamine amidotransferase type-1 domain occupies 291–542; the sequence is TIGMVGKYTE…VKAAYENHKK (252 aa). Residue Gly-352 participates in L-glutamine binding. Residue Cys-379 is the Nucleophile; for glutamine hydrolysis of the active site. L-glutamine-binding positions include 380-383, Glu-403, and Arg-470; that span reads LGMQ. Residues His-515 and Glu-517 contribute to the active site.

The protein belongs to the CTP synthase family. Homotetramer.

The enzyme catalyses UTP + L-glutamine + ATP + H2O = CTP + L-glutamate + ADP + phosphate + 2 H(+). It carries out the reaction L-glutamine + H2O = L-glutamate + NH4(+). It catalyses the reaction UTP + NH4(+) + ATP = CTP + ADP + phosphate + 2 H(+). Its pathway is pyrimidine metabolism; CTP biosynthesis via de novo pathway; CTP from UDP: step 2/2. With respect to regulation, allosterically activated by GTP, when glutamine is the substrate; GTP has no effect on the reaction when ammonia is the substrate. The allosteric effector GTP functions by stabilizing the protein conformation that binds the tetrahedral intermediate(s) formed during glutamine hydrolysis. Inhibited by the product CTP, via allosteric rather than competitive inhibition. Catalyzes the ATP-dependent amination of UTP to CTP with either L-glutamine or ammonia as the source of nitrogen. Regulates intracellular CTP levels through interactions with the four ribonucleotide triphosphates. This chain is CTP synthase, found in Haemophilus influenzae (strain PittGG).